We begin with the raw amino-acid sequence, 147 residues long: Hemoglobin subunit epsilon (147 aa).

The 145-residue stretch at His3–His147 folds into the Globin domain. Ser51 is subject to Phosphoserine. His64 and His93 together coordinate heme b.

The protein belongs to the globin family. Red blood cells.

In terms of biological role, hemoglobin epsilon chain is a beta-type chain found in early embryos. The sequence is that of Hemoglobin subunit epsilon (HBE1) from Oryctolagus cuniculus (Rabbit).